The sequence spans 120 residues: Large ribosomal subunit protein uL18 (120 aa).

This sequence belongs to the universal ribosomal protein uL18 family. Part of the 50S ribosomal subunit; part of the 5S rRNA/L5/L18/L25 subcomplex. Contacts the 5S and 23S rRNAs.

This is one of the proteins that bind and probably mediate the attachment of the 5S RNA into the large ribosomal subunit, where it forms part of the central protuberance. This is Large ribosomal subunit protein uL18 from Nitrobacter winogradskyi (strain ATCC 25391 / DSM 10237 / CIP 104748 / NCIMB 11846 / Nb-255).